The chain runs to 486 residues: Galactose-1-phosphate uridylyltransferase (486 aa).

The protein belongs to the galactose-1-phosphate uridylyltransferase type 2 family.

It is found in the cytoplasm. The catalysed reaction is alpha-D-galactose 1-phosphate + UDP-alpha-D-glucose = alpha-D-glucose 1-phosphate + UDP-alpha-D-galactose. Its pathway is carbohydrate metabolism; galactose metabolism. The protein is Galactose-1-phosphate uridylyltransferase of Lacticaseibacillus casei (strain BL23) (Lactobacillus casei).